The following is a 392-amino-acid chain: Phospho-N-acetylmuramoyl-pentapeptide-transferase (392 aa).

The next 10 helical transmembrane spans lie at 24–44 (YLTFRAVMAAMTALLIGLLAG), 76–96 (TMGGVLILGAIAISTLLWFDL), 100–120 (FVWVVLAVTLGFGAIGWVDDW), 137–157 (YFWQSVIGIVAALYLVFCISE), 193–213 (VSYPLGVLGFVILTYLVIVGS), 225–245 (GLAIMPVVMVGASLGVFAYVT), 262–282 (AGELLIFCSAMAGAGLAFLWF), 289–309 (VFMGDVGALALGGALGTIAII), 314–334 (IVLAIMGGIFVVEALSVMLQV), and 369–389 (QVVVRFWIITMLLCLIGLTTL).

It belongs to the glycosyltransferase 4 family. MraY subfamily. It depends on Mg(2+) as a cofactor.

The protein resides in the cell inner membrane. It catalyses the reaction UDP-N-acetyl-alpha-D-muramoyl-L-alanyl-gamma-D-glutamyl-meso-2,6-diaminopimeloyl-D-alanyl-D-alanine + di-trans,octa-cis-undecaprenyl phosphate = di-trans,octa-cis-undecaprenyl diphospho-N-acetyl-alpha-D-muramoyl-L-alanyl-D-glutamyl-meso-2,6-diaminopimeloyl-D-alanyl-D-alanine + UMP. Its pathway is cell wall biogenesis; peptidoglycan biosynthesis. Functionally, catalyzes the initial step of the lipid cycle reactions in the biosynthesis of the cell wall peptidoglycan: transfers peptidoglycan precursor phospho-MurNAc-pentapeptide from UDP-MurNAc-pentapeptide onto the lipid carrier undecaprenyl phosphate, yielding undecaprenyl-pyrophosphoryl-MurNAc-pentapeptide, known as lipid I. This Paracidovorax citrulli (strain AAC00-1) (Acidovorax citrulli) protein is Phospho-N-acetylmuramoyl-pentapeptide-transferase.